The following is a 211-amino-acid chain: MSAPKPFVIGIAGGTASGKTTLAQALARTLGERVALLPMDHYYKDLGHLPLEERLRVNYDHPDAFDLALYLEHAQALLRGLPVEMPVYDFRAYTRSPRRTPVRPAPVVILEGILVLYPKELRDLMDLKVFVDADADERFIRRLKRDVLERGRSLEGVVAQYLEQVKPMHLHFVEPTKRYADVIVPRGGQNPVALEMLAAKALARLARMGAA.

13-20 (GGTASGKT) is an ATP binding site.

Belongs to the uridine kinase family.

The protein resides in the cytoplasm. The catalysed reaction is uridine + ATP = UMP + ADP + H(+). It carries out the reaction cytidine + ATP = CMP + ADP + H(+). The protein operates within pyrimidine metabolism; CTP biosynthesis via salvage pathway; CTP from cytidine: step 1/3. It participates in pyrimidine metabolism; UMP biosynthesis via salvage pathway; UMP from uridine: step 1/1. The chain is Uridine kinase from Thermus thermophilus (strain ATCC BAA-163 / DSM 7039 / HB27).